A 718-amino-acid chain; its full sequence is uncharacterized protein (718 aa).

A run of 6 helical transmembrane segments spans residues 9–29 (VIST…IWFF), 60–80 (NVFF…LHIG), 83–103 (IQYI…GAVG), 136–156 (VMIL…YLFF), 391–411 (IVVF…GYWI), and 506–526 (LLDT…LWPD).

This sequence belongs to the YccS/YhfK family.

The protein localises to the cell membrane. This is an uncharacterized protein from Haemophilus influenzae (strain ATCC 51907 / DSM 11121 / KW20 / Rd).